We begin with the raw amino-acid sequence, 859 residues long: DNA mismatch repair protein MutS (859 aa).

An ATP-binding site is contributed by 617–624 (GPNMGGKS).

It belongs to the DNA mismatch repair MutS family.

Functionally, this protein is involved in the repair of mismatches in DNA. It is possible that it carries out the mismatch recognition step. This protein has a weak ATPase activity. This is DNA mismatch repair protein MutS from Stutzerimonas stutzeri (strain A1501) (Pseudomonas stutzeri).